The primary structure comprises 1201 residues: Coatomer subunit alpha (1201 aa).

6 WD repeats span residues serine 9–aspartate 39, aspartate 51–serine 81, glycine 93–asparagine 123, glycine 135–aspartate 165, glycine 207–arginine 237, and glycine 251–aspartate 281. Residues alanine 842–aspartate 862 are disordered. Acidic residues predominate over residues glutamate 848–aspartate 862.

As to quaternary structure, oligomeric complex that consists of at least the alpha, beta, beta', gamma, delta, epsilon and zeta subunits. Interacts with the ESCRT-0 subunit VPS27. Interacts with KEI1 (via C-terminal region).

The protein localises to the cytoplasm. It localises to the golgi apparatus membrane. The protein resides in the cytoplasmic vesicle. Its subcellular location is the COPI-coated vesicle membrane. In terms of biological role, the coatomer is a cytosolic protein complex that binds to dilysine motifs and reversibly associates with Golgi non-clathrin-coated vesicles, which further mediate biosynthetic protein transport from the ER, via the Golgi up to the trans Golgi network. Coatomer complex is required for budding from Golgi membranes, and is essential for the retrograde Golgi-to-ER transport of dilysine-tagged proteins. This chain is Coatomer subunit alpha (COP1), found in Saccharomyces cerevisiae (strain ATCC 204508 / S288c) (Baker's yeast).